We begin with the raw amino-acid sequence, 270 residues long: Probable inositol 1-monophosphatase ImpA (270 aa).

Residues E69, D85, I87, and D88 each contribute to the Mg(2+) site. E69 provides a ligand contact to substrate. Substrate contacts are provided by residues 87-90 (IDGT), R187, and D216. D216 contributes to the Mg(2+) binding site.

This sequence belongs to the inositol monophosphatase superfamily. It depends on Mg(2+) as a cofactor.

The catalysed reaction is a myo-inositol phosphate + H2O = myo-inositol + phosphate. It functions in the pathway polyol metabolism; myo-inositol biosynthesis; myo-inositol from D-glucose 6-phosphate: step 2/2. In terms of biological role, catalyzes the dephosphorylation of inositol 1-phosphate (I-1-P) to yield free myo-inositol, a key metabolite in mycobacteria. This is Probable inositol 1-monophosphatase ImpA (impA) from Mycobacterium tuberculosis (strain ATCC 25618 / H37Rv).